The primary structure comprises 103 residues: Small ribosomal subunit protein uS10 (103 aa).

This sequence belongs to the universal ribosomal protein uS10 family. As to quaternary structure, part of the 30S ribosomal subunit.

Functionally, involved in the binding of tRNA to the ribosomes. In Alteromonas mediterranea (strain DSM 17117 / CIP 110805 / LMG 28347 / Deep ecotype), this protein is Small ribosomal subunit protein uS10.